The primary structure comprises 122 residues: Basic phospholipase A2 PL-X (122 aa).

Cystine bridges form between C26–C115, C28–C44, C43–C95, C49–C122, C50–C88, C57–C81, and C75–C86. Residues Y27, G29, and G31 each coordinate Ca(2+). H47 is a catalytic residue. D48 serves as a coordination point for Ca(2+). Residue D89 is part of the active site.

Belongs to the phospholipase A2 family. Group II subfamily. D49 sub-subfamily. Ca(2+) serves as cofactor. As to expression, expressed by the venom gland.

The protein localises to the secreted. The enzyme catalyses a 1,2-diacyl-sn-glycero-3-phosphocholine + H2O = a 1-acyl-sn-glycero-3-phosphocholine + a fatty acid + H(+). PLA2 catalyzes the calcium-dependent hydrolysis of the 2-acyl groups in 3-sn-phosphoglycerides. The sequence is that of Basic phospholipase A2 PL-X from Protobothrops flavoviridis (Habu).